The primary structure comprises 444 residues: RING finger and transmembrane domain-containing protein 2 (444 aa).

Residues 1–181 (MWLFTVNQVL…ILLAKLCFQH (181 aa)) lie on the Extracellular side of the membrane. Disordered regions lie at residues 13 to 41 (MQRR…ASVD) and 92 to 149 (PASR…PGTP). The segment covering 107–121 (YHHRQPHHHFHHGGH) has biased composition (basic residues). A compositionally biased stretch (basic and acidic residues) spans 131 to 140 (GGDHRGHSEE). Residues 182–202 (KLGIAVCIGMASTFAYANSTL) traverse the membrane as a helical segment. Over 203-214 (REQVSLKEKRSV) the chain is Cytoplasmic. A helical transmembrane segment spans residues 215–235 (LVILWILAFLAGNTLYVLYTF). Residues 236-255 (SSQQLYNSLIFLKPNLETLD) are Extracellular-facing. Residues 256–276 (FFDLLWIVGIADFVLKYITIA) traverse the membrane as a helical segment. Over 277-329 (LKCLIVALPKIILAVKSKGKFYLVIEELSQLFRSLVPIQLWYKYIMGDDSSNS) the chain is Cytoplasmic. A helical membrane pass occupies residues 330–350 (YFLGGVLIVLYSLCKSFDICG). The Extracellular segment spans residues 351-444 (RVGGVRKALK…GATSAHFQVY (94 aa)). The RING-type; degenerate zinc finger occupies 384-422 (CAICQAEFREPLILLCQHVFCEECLCLWLDRERTCPLSR).

It is found in the membrane. Its function is as follows. E3 ubiquitin-protein ligase that negatively regulates IL3-dependent cellular responses through IL3RA ubiquitination and degradation by the proteasome, having an anti-inflammatory effect. The chain is RING finger and transmembrane domain-containing protein 2 (RNFT2) from Pongo abelii (Sumatran orangutan).